A 100-amino-acid polypeptide reads, in one-letter code: Chorion class A protein M2774 (100 aa).

A left arm region spans residues 1–33 (GGGWNGWNGLGGGWNGLGVGWSRLDGGYGGGCG). The central domain stretch occupies residues 34 to 81 (SYGGEGIGNVGVADELPVGGVTAVGGRVPIIGGVEYGGPARAAGAVSI). The right arm stretch occupies residues 82-100 (CGHCAPTCGCGRAGLGGYY).

The protein belongs to the chorion protein family.

Functionally, this protein is one of many from the eggshell of the silk moth. This is Chorion class A protein M2774 from Bombyx mori (Silk moth).